Consider the following 402-residue polypeptide: MSRVSQARNLGKYFLLIDNMLVVLGFFVVFPLISIRFVDQMGWAAVMVGIALGLRQFIQQGLGIFGGAIADRFGAKPMIVTGMLMRAAGFATMGIAHEPWLLWFSCLLSGLGGTLFDPPRSALVVKLIRPQQRGRFFSLLMMQDSAGAVIGALLGSWLLQYDFRLVCATGAVLFVLCAAFNAWLLPAWKLSTVRTPVREGMTRVMRDKRFVTYVLTLAGYYMLAVQVMLMLPIMVNDVAGAPSAVKWMYAIEACLSLTLLYPIARWSEKHFRLEHRLMAGLLIMSLSMMPVGMVSGLQQLFNLICLFYIGSIIAEPARETLSASLADARARGSYMGFSRLGLAIGGAIGYIGGGWLFDLGKSAHQPELPWMMLGIIGIFTFLALGWQFSQKRAARRLLERDA.

Residues 1 to 12 (MSRVSQARNLGK) are Cytoplasmic-facing. Residues 13 to 33 (YFLLIDNMLVVLGFFVVFPLI) traverse the membrane as a helical segment. Residues 34–98 (SIRFVDQMGW…GFATMGIAHE (65 aa)) are Periplasmic-facing. The helical transmembrane segment at 99–116 (PWLLWFSCLLSGLGGTLF) threads the bilayer. The Cytoplasmic portion of the chain corresponds to 117–138 (DPPRSALVVKLIRPQQRGRFFS). The helical transmembrane segment at 139–159 (LLMMQDSAGAVIGALLGSWLL) threads the bilayer. The Periplasmic portion of the chain corresponds to 160–164 (QYDFR). A helical transmembrane segment spans residues 165–185 (LVCATGAVLFVLCAAFNAWLL). At 186–213 (PAWKLSTVRTPVREGMTRVMRDKRFVTY) the chain is on the cytoplasmic side. Residues 214–234 (VLTLAGYYMLAVQVMLMLPIM) form a helical membrane-spanning segment. The Periplasmic segment spans residues 235–243 (VNDVAGAPS). The chain crosses the membrane as a helical span at residues 244–264 (AVKWMYAIEACLSLTLLYPIA). Residues 265 to 276 (RWSEKHFRLEHR) lie on the Cytoplasmic side of the membrane. Residues 277–297 (LMAGLLIMSLSMMPVGMVSGL) traverse the membrane as a helical segment. At 298-299 (QQ) the chain is on the periplasmic side. A helical membrane pass occupies residues 300-320 (LFNLICLFYIGSIIAEPARET). The Cytoplasmic segment spans residues 321–339 (LSASLADARARGSYMGFSR). Residues 340 to 360 (LGLAIGGAIGYIGGGWLFDLG) traverse the membrane as a helical segment. The Periplasmic portion of the chain corresponds to 361–367 (KSAHQPE). A helical transmembrane segment spans residues 368–388 (LPWMMLGIIGIFTFLALGWQF). The Cytoplasmic portion of the chain corresponds to 389–402 (SQKRAARRLLERDA).

The protein belongs to the major facilitator superfamily. DHA1 family. MdtH (TC 2.A.1.2.21) subfamily.

It is found in the cell inner membrane. Its function is as follows. Confers resistance to norfloxacin and enoxacin. In Escherichia coli O9:H4 (strain HS), this protein is Multidrug resistance protein MdtH.